We begin with the raw amino-acid sequence, 273 residues long: MTNSTIRIAVVGAGGRMGRQLIQAITQTKGVVLGAAVERAGSTLVGSDAGELAGTGLLNIAVSDDLSKVTDHFDVLIDFTRPEGTLEHLAICRAHHKAMVIGTTGFDDAGKAAISAASAEIGIVFAANFSVGVNVVLKLLEKAAKVMGDYTDIEIIEAHHRYKVDAPSGTALAMGEAIAESLGRSLKDCAVYTREGHTGERKPGTIGFATVRAGDIVGEHTAMFADIGERVEITHKATSRMTFANGAVKSAIWLSNHDNGLFDMRDVLSLNEL.

Residues 12-17 (GAGGRM) and Glu38 contribute to the NAD(+) site. Residue Arg39 coordinates NADP(+). NAD(+) contacts are provided by residues 102–104 (GTT) and 126–129 (AANF). Residue His159 is the Proton donor/acceptor of the active site. Residue His160 participates in (S)-2,3,4,5-tetrahydrodipicolinate binding. Lys163 functions as the Proton donor in the catalytic mechanism. 169-170 (GT) contacts (S)-2,3,4,5-tetrahydrodipicolinate.

This sequence belongs to the DapB family. In terms of assembly, homotetramer.

It localises to the cytoplasm. It catalyses the reaction (S)-2,3,4,5-tetrahydrodipicolinate + NAD(+) + H2O = (2S,4S)-4-hydroxy-2,3,4,5-tetrahydrodipicolinate + NADH + H(+). It carries out the reaction (S)-2,3,4,5-tetrahydrodipicolinate + NADP(+) + H2O = (2S,4S)-4-hydroxy-2,3,4,5-tetrahydrodipicolinate + NADPH + H(+). The protein operates within amino-acid biosynthesis; L-lysine biosynthesis via DAP pathway; (S)-tetrahydrodipicolinate from L-aspartate: step 4/4. Catalyzes the conversion of 4-hydroxy-tetrahydrodipicolinate (HTPA) to tetrahydrodipicolinate. The protein is 4-hydroxy-tetrahydrodipicolinate reductase of Yersinia enterocolitica serotype O:8 / biotype 1B (strain NCTC 13174 / 8081).